We begin with the raw amino-acid sequence, 526 residues long: Delayed-rectifier potassium channel regulatory subunit KCNS1 (526 aa).

Topologically, residues 1–217 are cytoplasmic; sequence MLMLLVRGTH…LTMENPGYSL (217 aa). Residues 218–239 form a helical membrane-spanning segment; sequence PSKLFSCVSISVVLASIAAMCI. Residues 240-270 lie on the Extracellular side of the membrane; that stretch reads HSLPEYQAREAAAAVAAVAAGRSPEGVRDDP. The helical transmembrane segment at 271–293 threads the bilayer; it reads VLRRLEYFCIAWFSFEVSSRLLL. At 294–304 the chain is on the cytoplasmic side; that stretch reads APSTRNFFCHP. Residues 305-322 traverse the membrane as a helical segment; it reads LNLIDIVSVLPFYLTLLA. Residues 323–337 are Extracellular-facing; the sequence is GVALGDQGGKEFGHL. A helical; Voltage-sensor transmembrane segment spans residues 338–358; it reads GKVVQVFRLMRIFRVLKLARH. Topologically, residues 359–373 are cytoplasmic; that stretch reads STGLRSLGATLKHSY. The chain crosses the membrane as a helical span at residues 374–395; that stretch reads REVGILLLYLAVGVSVFSGVAY. Topologically, residues 396–408 are extracellular; it reads TAEKEEDVGFNTI. Residues 409–420 constitute an intramembrane region (helical); sequence PACWWWGTVSMT. Positions 421-426 match the Selectivity filter motif; sequence TVGYGD. An intramembrane segment occupies 421-428; the sequence is TVGYGDVV. Residues 429 to 435 lie on the Extracellular side of the membrane; that stretch reads PVTVAGK. The chain crosses the membrane as a helical span at residues 436–464; sequence LAASGCILGGILVVALPITIIFNKFSHFY. The Cytoplasmic segment spans residues 465–526; the sequence is RRQKALEAAV…PSEPPHPQMY (62 aa). Residues 491–526 are disordered; sequence GVSEASLETSRETSQEGRSADLESQAPSEPPHPQMY. Basic and acidic residues predominate over residues 499 to 511; that stretch reads TSRETSQEGRSAD.

This sequence belongs to the potassium channel family. S (TC 1.A.1.2) subfamily. Kv9.1/KCNS1 sub-subfamily. In terms of assembly, heterotetramer with KCNB1. Heterotetramer with KCNB2. Does not form homomultimers.

The protein localises to the cell membrane. Its function is as follows. Potassium channel regulatory subunit that modulate the delayed rectifier voltage-gated potassium channel activity of KCNB1 and KCNB2 by altering their kinetics, expression levels, and shifting the half-inactivation potential to more polarized values. While it does not form functional channels on its own, it can form functional heterotetrameric channels with KCNB1 and KCNB2. Each regulatory subunit has unique regulatory properties that can lead to extensive inhibition, significant changes in kinetics, and/or substantial shifts in the voltage dependencies of the inactivation process. In Pan troglodytes (Chimpanzee), this protein is Delayed-rectifier potassium channel regulatory subunit KCNS1.